The primary structure comprises 741 residues: uncharacterized protein (741 aa).

5 helical membrane passes run 34–54, 76–96, 120–140, 156–176, and 187–207; these read WLLW…LLII, LIIP…FING, LAVL…FVSL, LSVF…LIII, and LLLL…AFSI. Residues 404-423 show a composition bias toward basic and acidic residues; it reads EAEEKERQEKEEKEKAEKDN. 2 disordered regions span residues 404–473 and 555–647; these read EAEE…FRPR and QKEL…ENAK. The span at 424 to 439 shows a compositional bias: polar residues; sequence GNGQDSNKVNSVSTEP. Basic and acidic residues-rich tracts occupy residues 445-465 and 555-573; these read SDAD…DSSK and QKEL…DQKS. Positions 623-643 are enriched in acidic residues; the sequence is DNTDESEDKQSEEEEKFDEEI. A run of 2 helical transmembrane segments spans residues 655-675 and 715-735; these read AFFN…ENGA and VIIA…FFAY.

It to M.pneumoniae MPN_333.

The protein localises to the cell membrane. This is an uncharacterized protein from Mycoplasma pneumoniae (strain ATCC 29342 / M129 / Subtype 1) (Mycoplasmoides pneumoniae).